Reading from the N-terminus, the 304-residue chain is tRNA-5-methyluridine(54) 2-sulfurtransferase (304 aa).

Zn(2+) is bound by residues C3, C6, C22, and H25. ATP is bound by residues A53 and I79. [4Fe-4S] cluster is bound by residues C131 and C134. Residues R138 and G157 each coordinate ATP. C224 lines the [4Fe-4S] cluster pocket. Residues C274, C277, C286, and C289 each coordinate Zn(2+).

It belongs to the TtcA family. TtuA subfamily. Homodimer. [4Fe-4S] cluster is required as a cofactor. Requires Mg(2+) as cofactor.

It catalyses the reaction 5-methyluridine(54) in tRNA + hydrogen sulfide + ATP = 5-methyl-2-thiouridine(54) in tRNA + AMP + diphosphate. The protein operates within tRNA modification. Functionally, catalyzes the ATP-dependent 2-thiolation of 5-methyluridine residue at position 54 in the T loop of tRNAs, leading to 5-methyl-2-thiouridine (m(5)s(2)U or s(2)T). This modification allows thermal stabilization of tRNAs in thermophilic microorganisms, and is required for cell growth at high temperatures. Can use free sulfide as sulfur source in vitro. The protein is tRNA-5-methyluridine(54) 2-sulfurtransferase of Thermotoga maritima (strain ATCC 43589 / DSM 3109 / JCM 10099 / NBRC 100826 / MSB8).